Reading from the N-terminus, the 472-residue chain is 3-isopropylmalate dehydratase large subunit (472 aa).

3 residues coordinate [4Fe-4S] cluster: C347, C409, and C412.

This sequence belongs to the aconitase/IPM isomerase family. LeuC type 1 subfamily. In terms of assembly, heterodimer of LeuC and LeuD. It depends on [4Fe-4S] cluster as a cofactor.

It carries out the reaction (2R,3S)-3-isopropylmalate = (2S)-2-isopropylmalate. It participates in amino-acid biosynthesis; L-leucine biosynthesis; L-leucine from 3-methyl-2-oxobutanoate: step 2/4. Its function is as follows. Catalyzes the isomerization between 2-isopropylmalate and 3-isopropylmalate, via the formation of 2-isopropylmaleate. The protein is 3-isopropylmalate dehydratase large subunit of Salinibacter ruber (strain DSM 13855 / M31).